We begin with the raw amino-acid sequence, 22 residues long: Cysteine protease inhibitor 4 (22 aa).

Belongs to the protease inhibitor I3 (leguminous Kunitz-type inhibitor) family. Tubers.

It localises to the vacuole. Its function is as follows. Inhibitor of papain (cysteine protease). Does not inhibit trypsin, chymotrypsin nor elastase (serine proteases). May protect the plant by inhibiting proteases of invading organisms. The chain is Cysteine protease inhibitor 4 from Solanum tuberosum (Potato).